We begin with the raw amino-acid sequence, 425 residues long: Nicotinate dehydrogenase large molybdopterin subunit (425 aa).

Residues Q208 and 238 to 240 (GFG) contribute to the Se-Mo-molybdopterin cytosine dinucleotide site.

It belongs to the xanthine dehydrogenase family. As to quaternary structure, heterooctamer of NDHM, NDHL, NDHS and NDHF. Dimer of heterotetramers. Se-Mo-molybdopterin cytosine dinucleotide is required as a cofactor.

It catalyses the reaction nicotinate + NADP(+) + H2O = 6-hydroxynicotinate + NADPH + H(+). The protein operates within cofactor degradation; nicotinate degradation; 6-hydroxynicotinate from nicotinate: step 1/1. With respect to regulation, reversibly inactivated by selenide and sulfide. Not inhibited by cyanide. Functionally, catalyzes the hydroxylation of nicotinate to 6-hydroxynicotinate. Also active against 2-pyrazinecarboxylic acid, but inactive against other nicotinate analogs. The chain is Nicotinate dehydrogenase large molybdopterin subunit (ndhL) from Eubacterium barkeri (Clostridium barkeri).